The chain runs to 376 residues: tRNA-specific 2-thiouridylase MnmA (376 aa).

Residues G17–S24 and M43 each bind ATP. An interaction with target base in tRNA region spans residues N103 to D105. C108 acts as the Nucleophile in catalysis. Cysteines 108 and 204 form a disulfide. G132 contributes to the ATP binding site. The tract at residues K154 to Q156 is interaction with tRNA. C204 functions as the Cysteine persulfide intermediate in the catalytic mechanism. An interaction with tRNA region spans residues R316–Y317.

This sequence belongs to the MnmA/TRMU family.

The protein resides in the cytoplasm. The catalysed reaction is S-sulfanyl-L-cysteinyl-[protein] + uridine(34) in tRNA + AH2 + ATP = 2-thiouridine(34) in tRNA + L-cysteinyl-[protein] + A + AMP + diphosphate + H(+). Its function is as follows. Catalyzes the 2-thiolation of uridine at the wobble position (U34) of tRNA, leading to the formation of s(2)U34. This chain is tRNA-specific 2-thiouridylase MnmA, found in Pseudomonas savastanoi pv. phaseolicola (strain 1448A / Race 6) (Pseudomonas syringae pv. phaseolicola (strain 1448A / Race 6)).